Consider the following 462-residue polypeptide: cAMP-dependent protein kinase regulatory subunit (462 aa).

Residues 54–203 (TPSPRFPPSP…RLKYAIEGNF (150 aa)) form a dimerization and phosphorylation region. Positions 79–157 (FGANANPFGG…PTTDSYPAQY (79 aa)) are disordered. Over residues 80 to 102 (GANANPFGGSSSNPNPFGGSASP) the composition is skewed to low complexity. Position 164 is a phosphoserine (Ser-164). Residues 204–333 (LFSH…FLEE), Glu-282, Arg-291, 336–453 (ILSS…KTGV), Glu-401, and Arg-410 contribute to the 3',5'-cyclic AMP site.

This sequence belongs to the cAMP-dependent kinase regulatory chain family. As to quaternary structure, tetramer, composed of 2 regulatory (R) and 2 catalytic (C) subunits. In the presence of cAMP it dissociates into 2 active monomeric C subunits and an R dimer.

The sequence is that of cAMP-dependent protein kinase regulatory subunit (pkar1) from Hypocrea atroviridis (Trichoderma atroviride).